The primary structure comprises 140 residues: L-fucose mutarotase (140 aa).

His-22 (proton donor) is an active-site residue. Residues Asp-30, Arg-107, and Tyr-129–Asn-131 contribute to the substrate site.

This sequence belongs to the RbsD / FucU family. FucU mutarotase subfamily. Homodecamer.

It localises to the cytoplasm. It catalyses the reaction alpha-L-fucose = beta-L-fucose. Its pathway is carbohydrate metabolism; L-fucose metabolism. In terms of biological role, involved in the anomeric conversion of L-fucose. This chain is L-fucose mutarotase, found in Salmonella paratyphi B (strain ATCC BAA-1250 / SPB7).